Here is a 359-residue protein sequence, read N- to C-terminus: Peroxisome assembly protein 12 (359 aa).

Residues 1 to 19 (MAEHGAHFTAASVADDQPS) are Peroxisomal matrix-facing. The chain crosses the membrane as a helical span at residues 20–47 (IFEVVAQDSLMTAVRPALQHVVKVLAES). Residues 48-51 (NPTH) are Cytoplasmic-facing. A helical membrane pass occupies residues 52 to 76 (YGFLWRWFDEIFTLLDLLLQQHYLS). At 77–109 (RTSASFSENFYGLKRIVMGDTHKSQRLASAGLP) the chain is on the peroxisomal matrix side. Residues 110 to 139 (KQQLWKSIMFLVLLPYLKVKLEKLVSSLRE) form a helical membrane-spanning segment. Residues 140 to 144 (EDEYS) are Cytoplasmic-facing. A helical transmembrane segment spans residues 145 to 183 (IHPPSSRWKRFYRAFLAAYPFVNMAWEGWFLVQQLRYIL). Topologically, residues 184–249 (GKAQHHSPLL…VGGVALSLST (66 aa)) are peroxisomal matrix. A helical transmembrane segment spans residues 250–277 (GLSVGVFFLQFLDWWYSSENQETIKSLT). Over 278-359 (ALPTPPPPVH…HLIKLYSPEN (82 aa)) the chain is Cytoplasmic. Cys304, Cys307, Cys325, and Cys328 together coordinate Zn(2+). The RING-type; degenerate zinc-finger motif lies at 304-343 (CPLCRKTRVNDTVLATSGYVFCYRCVFHYVRSHQACPITG).

It belongs to the pex2/pex10/pex12 family. As to quaternary structure, component of the PEX2-PEX10-PEX12 retrotranslocation channel, composed of PEX2, PEX10 and PEX12. Interacts with PEX19 via its cytoplasmic domain.

It localises to the peroxisome membrane. The protein operates within protein modification; protein ubiquitination. In terms of biological role, component of a retrotranslocation channel required for peroxisome organization by mediating export of the PEX5 receptor from peroxisomes to the cytosol, thereby promoting PEX5 recycling. The retrotranslocation channel is composed of PEX2, PEX10 and PEX12; each subunit contributing transmembrane segments that coassemble into an open channel that specifically allows the passage of PEX5 through the peroxisomal membrane. PEX12 also regulates PEX5 recycling by activating the E3 ubiquitin-protein ligase activity of PEX10. When PEX5 recycling is compromised, PEX12 stimulates PEX10-mediated polyubiquitination of PEX5, leading to its subsequent degradation. In Homo sapiens (Human), this protein is Peroxisome assembly protein 12.